The primary structure comprises 93 residues: Large ribosomal subunit protein uL23cz/uL23cy (93 aa).

Belongs to the universal ribosomal protein uL23 family. As to quaternary structure, part of the 50S ribosomal subunit.

Its subcellular location is the plastid. The protein resides in the chloroplast. In terms of biological role, binds to 23S rRNA. This Oenothera elata subsp. hookeri (Hooker's evening primrose) protein is Large ribosomal subunit protein uL23cz/uL23cy (rpl23-A).